The primary structure comprises 376 residues: Chaperone protein DnaJ (376 aa).

The J domain maps to 5 to 70 (DYYEILGVSK…QKRAAYDQYG (66 aa)). The CR-type zinc-finger motif lies at 131 to 209 (GVTKEIRIPT…CHGHGRVERS (79 aa)). Positions 144, 147, 161, 164, 183, 186, 197, and 200 each coordinate Zn(2+). 4 CXXCXGXG motif repeats span residues 144–151 (CDVCHGSG), 161–168 (CPTCHGSG), 183–190 (CPHCQGRG), and 197–204 (CNKCHGHG).

It belongs to the DnaJ family. In terms of assembly, homodimer. Requires Zn(2+) as cofactor.

It localises to the cytoplasm. Functionally, participates actively in the response to hyperosmotic and heat shock by preventing the aggregation of stress-denatured proteins and by disaggregating proteins, also in an autonomous, DnaK-independent fashion. Unfolded proteins bind initially to DnaJ; upon interaction with the DnaJ-bound protein, DnaK hydrolyzes its bound ATP, resulting in the formation of a stable complex. GrpE releases ADP from DnaK; ATP binding to DnaK triggers the release of the substrate protein, thus completing the reaction cycle. Several rounds of ATP-dependent interactions between DnaJ, DnaK and GrpE are required for fully efficient folding. Also involved, together with DnaK and GrpE, in the DNA replication of plasmids through activation of initiation proteins. The chain is Chaperone protein DnaJ from Shigella flexneri serotype 5b (strain 8401).